Reading from the N-terminus, the 369-residue chain is Glycolate oxidase (369 aa).

At M1 the chain carries N-acetylmethionine. The region spanning 1-359 (MEITNVNEYE…SRSHIAADWD (359 aa)) is the FMN hydroxy acid dehydrogenase domain. Y24 provides a ligand contact to glyoxylate. FMN-binding positions include 77–79 (PTA), S106, 127–129 (QLY), and T155. Glyoxylate is bound at residue Y129. Residue R164 coordinates glyoxylate. Positions 230 and 252 each coordinate FMN. H254 and R257 together coordinate glyoxylate. The active-site Proton acceptor is the H254. Residues 285–289 (DGGVR) and 308–309 (GR) contribute to the FMN site. A Microbody targeting signal motif is present at residues 367-369 (ARL).

It belongs to the FMN-dependent alpha-hydroxy acid dehydrogenase family. As to quaternary structure, homotetramer. FMN is required as a cofactor.

The protein localises to the peroxisome. The enzyme catalyses glycolate + O2 = glyoxylate + H2O2. The catalysed reaction is a (2S)-2-hydroxycarboxylate + O2 = a 2-oxocarboxylate + H2O2. The protein operates within photosynthesis; photorespiration; glycine from 2-phosphoglycolate: step 2/3. Functionally, catalyzes the oxidation of glycolate to glyoxylate, with a reduction of O2 to H2O2. Is a key enzyme in photorespiration in green plants. To a lesser extent, is also able to use L-lactate and 2-hydroxbyutanoate as substrate in vitro, but shows almost no activity with L-mandelate. The sequence is that of Glycolate oxidase from Spinacia oleracea (Spinach).